The chain runs to 328 residues: 4-hydroxy-3-methylbut-2-enyl diphosphate reductase (328 aa).

[4Fe-4S] cluster is bound at residue C13. (2E)-4-hydroxy-3-methylbut-2-enyl diphosphate-binding residues include H41 and H75. The dimethylallyl diphosphate site is built by H41 and H75. Isopentenyl diphosphate-binding residues include H41 and H75. Residue C97 coordinates [4Fe-4S] cluster. H125 provides a ligand contact to (2E)-4-hydroxy-3-methylbut-2-enyl diphosphate. H125 lines the dimethylallyl diphosphate pocket. H125 is a binding site for isopentenyl diphosphate. E127 (proton donor) is an active-site residue. T168 is a binding site for (2E)-4-hydroxy-3-methylbut-2-enyl diphosphate. Position 225 (C225) interacts with [4Fe-4S] cluster. S253, S254, N255, and S302 together coordinate (2E)-4-hydroxy-3-methylbut-2-enyl diphosphate. Residues S253, S254, N255, and S302 each coordinate dimethylallyl diphosphate. S253, S254, N255, and S302 together coordinate isopentenyl diphosphate.

The protein belongs to the IspH family. Requires [4Fe-4S] cluster as cofactor.

The enzyme catalyses isopentenyl diphosphate + 2 oxidized [2Fe-2S]-[ferredoxin] + H2O = (2E)-4-hydroxy-3-methylbut-2-enyl diphosphate + 2 reduced [2Fe-2S]-[ferredoxin] + 2 H(+). It carries out the reaction dimethylallyl diphosphate + 2 oxidized [2Fe-2S]-[ferredoxin] + H2O = (2E)-4-hydroxy-3-methylbut-2-enyl diphosphate + 2 reduced [2Fe-2S]-[ferredoxin] + 2 H(+). Its pathway is isoprenoid biosynthesis; dimethylallyl diphosphate biosynthesis; dimethylallyl diphosphate from (2E)-4-hydroxy-3-methylbutenyl diphosphate: step 1/1. It functions in the pathway isoprenoid biosynthesis; isopentenyl diphosphate biosynthesis via DXP pathway; isopentenyl diphosphate from 1-deoxy-D-xylulose 5-phosphate: step 6/6. Functionally, catalyzes the conversion of 1-hydroxy-2-methyl-2-(E)-butenyl 4-diphosphate (HMBPP) into a mixture of isopentenyl diphosphate (IPP) and dimethylallyl diphosphate (DMAPP). Acts in the terminal step of the DOXP/MEP pathway for isoprenoid precursor biosynthesis. This is 4-hydroxy-3-methylbut-2-enyl diphosphate reductase from Chlorobium chlorochromatii (strain CaD3).